The sequence spans 135 residues: Small ribosomal subunit protein uS8 (135 aa).

Belongs to the universal ribosomal protein uS8 family. Part of the 30S ribosomal subunit. Contacts proteins S5 and S12.

One of the primary rRNA binding proteins, it binds directly to 16S rRNA central domain where it helps coordinate assembly of the platform of the 30S subunit. The polypeptide is Small ribosomal subunit protein uS8 (Cutibacterium acnes (strain DSM 16379 / KPA171202) (Propionibacterium acnes)).